Reading from the N-terminus, the 348-residue chain is Peptidyl-Lys metalloendopeptidase (348 aa).

The signal sequence occupies residues 1-18; sequence MFSSVMVALVSLAVAVSA. The propeptide occupies 19-181; that stretch reads NPGLSLKVSG…RATPTLTRPV (163 aa). Intrachain disulfides connect cysteine 186–cysteine 256 and cysteine 258–cysteine 278. A glycan (O-linked (Man) threonine; partial) is linked at threonine 223. Histidine 298 contacts Zn(2+). Glutamate 299 is a catalytic residue. Zn(2+) contacts are provided by histidine 302 and aspartate 311.

Requires Zn(2+) as cofactor.

It localises to the secreted. It carries out the reaction Preferential cleavage in proteins: -Xaa-|-Lys- (in which Xaa may be Pro).. With respect to regulation, inhibited by chelating agents such as EDTA and 1,10-phenanthroline. The chain is Peptidyl-Lys metalloendopeptidase (MEP) from Grifola frondosa (Maitake).